Consider the following 475-residue polypeptide: Sulfate adenylyltransferase subunit 1 (475 aa).

Residues K25–R239 form the tr-type G domain. Positions G34–S41 are G1. A GTP-binding site is contributed by G34–S41. The G2 stretch occupies residues G92–D96. Residues D113–G116 are G3. Residues D113–H117 and N168–D171 contribute to the GTP site. A G4 region spans residues N168 to D171. Residues S206–L208 form a G5 region.

It belongs to the TRAFAC class translation factor GTPase superfamily. Classic translation factor GTPase family. CysN/NodQ subfamily. As to quaternary structure, heterodimer composed of CysD, the smaller subunit, and CysN.

It carries out the reaction sulfate + ATP + H(+) = adenosine 5'-phosphosulfate + diphosphate. It functions in the pathway sulfur metabolism; hydrogen sulfide biosynthesis; sulfite from sulfate: step 1/3. In terms of biological role, with CysD forms the ATP sulfurylase (ATPS) that catalyzes the adenylation of sulfate producing adenosine 5'-phosphosulfate (APS) and diphosphate, the first enzymatic step in sulfur assimilation pathway. APS synthesis involves the formation of a high-energy phosphoric-sulfuric acid anhydride bond driven by GTP hydrolysis by CysN coupled to ATP hydrolysis by CysD. The protein is Sulfate adenylyltransferase subunit 1 of Shigella flexneri serotype 5b (strain 8401).